We begin with the raw amino-acid sequence, 140 residues long: Histone H2B (140 aa).

Residues 1 to 10 (MPPKAAEKKP) are compositionally biased toward basic and acidic residues. Residues 1-48 (MPPKAAEKKPTTGGKAPAGKAPAEKKEAGKKTAAAASGDKKKRGKTRK) form a disordered region. Residues Lys8 and Lys9 each carry the N6-acetyllysine; alternate modification. Residues Lys8 and Lys9 each participate in a glycyl lysine isopeptide (Lys-Gly) (interchain with G-Cter in SUMO); alternate cross-link. The span at 11–21 (TTGGKAPAGKA) shows a compositional bias: low complexity. At Lys15 the chain carries N6-acetyllysine. The residue at position 25 (Lys25) is an N6-acetyllysine; alternate. Residue Lys25 forms a Glycyl lysine isopeptide (Lys-Gly) (interchain with G-Cter in SUMO); alternate linkage. Residue Lys26 forms a Glycyl lysine isopeptide (Lys-Gly) (interchain with G-Cter in SUMO) linkage. A Glycyl lysine isopeptide (Lys-Gly) (interchain with G-Cter in ubiquitin) cross-link involves residue Lys134.

It belongs to the histone H2B family. In terms of assembly, the nucleosome is a histone octamer containing two molecules each of H2A, H2B, H3 and H4 assembled in one H3-H4 heterotetramer and two H2A-H2B heterodimers. The octamer wraps approximately 147 bp of DNA. Monoubiquitinated by the ubc2-bre1 complex to form H2BK123ub1. H2BK123ub1 gives a specific tag for epigenetic transcriptional activation and is also prerequisite for H3K4me and H3K79me formation. H2BK123ub1 also modulates the formation of double-strand breaks during meiosis and is a prerequisite for DNA-damage checkpoint activation. In terms of processing, acetylated by gcn5 to form H2BK11ac and H2BK16ac. H2BK16ac can also be formed by esa1. Acetylation of N-terminal lysines and particularly formation of H2BK11acK16ac has a positive effect on transcription. Post-translationally, sumoylation to form H2BK6su or H2BK7su, and probably also H2BK16su or H2BK17su, occurs preferentially near the telomeres and represses gene transcription.

It is found in the nucleus. It localises to the chromosome. Its function is as follows. Core component of nucleosome. Nucleosomes wrap and compact DNA into chromatin, limiting DNA accessibility to the cellular machineries which require DNA as a template. Histones thereby play a central role in transcription regulation, DNA repair, DNA replication and chromosomal stability. DNA accessibility is regulated via a complex set of post-translational modifications of histones, also called histone code, and nucleosome remodeling. This is Histone H2B (htb1) from Aspergillus terreus (strain NIH 2624 / FGSC A1156).